A 114-amino-acid chain; its full sequence is uncharacterized protein (114 aa).

Residue G2 is the site of N-myristoyl glycine; by host attachment. 2 helical membrane passes run F11–L31 and G44–I64. The interval V73–S114 is disordered. Residues K75–I92 show a composition bias toward basic and acidic residues. Polar residues predominate over residues S96–S114.

It is found in the membrane. This is an uncharacterized protein from Acanthamoeba polyphaga (Amoeba).